We begin with the raw amino-acid sequence, 167 residues long: MICKKKFLSPIINLFHSIIINCKGMYITLRYMFKPKVTLNYPLEKGPLSTRFRGEHALRKYKNGEERCIACKLCEAICPAQAITIEAQERDDGSRRTVRYDIDMTKCIYCGFCQEACPVDAIVEGPNFEYATETREELMYNKSKLLHNGQVWEEAIDFRIKKNSQFY.

2 4Fe-4S ferredoxin-type domains span residues R59 to Q88 and V98 to N127. [4Fe-4S] cluster is bound by residues C68, C71, C74, C78, C107, C110, C113, and C117.

This sequence belongs to the complex I 23 kDa subunit family. In terms of assembly, NDH-1 is composed of 14 different subunits. Subunits NuoA, H, J, K, L, M, N constitute the membrane sector of the complex. Requires [4Fe-4S] cluster as cofactor.

Its subcellular location is the cell inner membrane. It carries out the reaction a quinone + NADH + 5 H(+)(in) = a quinol + NAD(+) + 4 H(+)(out). Functionally, NDH-1 shuttles electrons from NADH, via FMN and iron-sulfur (Fe-S) centers, to quinones in the respiratory chain. The immediate electron acceptor for the enzyme in this species is believed to be ubiquinone. Couples the redox reaction to proton translocation (for every two electrons transferred, four hydrogen ions are translocated across the cytoplasmic membrane), and thus conserves the redox energy in a proton gradient. The polypeptide is NADH-quinone oxidoreductase subunit I (Ehrlichia canis (strain Jake)).